Consider the following 648-residue polypeptide: ABC transporter G family member 14 (648 aa).

The region spanning 53-304 (LKFEEVVYKV…FSSLGFSTSL (252 aa)) is the ABC transporter domain. Residue 99–106 (GPSGSGKT) participates in ATP binding. A glycan (N-linked (GlcNAc...) asparagine) is linked at Asn346. An ABC transmembrane type-2 domain is found at 384–590 (YQFTVLLQRG…CYKLLLGIQY (207 aa)). 7 consecutive transmembrane segments (helical) span residues 405–425 (LRIF…WHTP), 435–455 (LLFF…VFTF), 485–505 (LPLE…MGGL), 512–532 (FILS…LGLA), 543–562 (ATTL…GYYV), 569–591 (IVWL…IQYT), and 620–640 (LWID…MAYM).

It belongs to the ABC transporter superfamily. ABCG family. Eye pigment precursor importer (TC 3.A.1.204) subfamily. Forms heterodimers with ABCG11. As to expression, accumulates primarily in the pericycle and stelar cells of roots. Expressed in leaves, stems, flowers and siliques, and, at low levels, in roots. Accumulates in the phloem.

It is found in the cell membrane. Positive regulator of plant growth which acts as an efflux pump involved in the major root-to-shoot (acropetal) long-distance cytokinin (CK) transport via the xylem sap. Together with ABCG9 and ABCG11, required for vascular development by regulating lipid/sterol homeostasis. Involved in CK-dependent responses to oxidative stress such as hydrogen peroxide H(2)O(2). Its function is as follows. (Microbial infection) Required for SNC1-mediated defense response against the virulent pathogen Pseudomonas syringae pv. tomato DC3000 by promoting the accumulation of trans-zeatin (tZ)-type cytokinins (CK) in the shoot. The sequence is that of ABC transporter G family member 14 from Arabidopsis thaliana (Mouse-ear cress).